The chain runs to 541 residues: uncharacterized protein (541 aa).

6 consecutive transmembrane segments (helical) span residues 57 to 77, 90 to 110, 144 to 164, 167 to 187, 221 to 241, and 257 to 277; these read LVVTANLLGIGVALLLVTIAI, LTFGVVPGYVLLALALGSYAL, VGHLMFWGVGTALLTTLYGLI, AFIPRFLFAVSFCGVLVATAT, MVVWLLGSGVPVVGIALMAMF, and VLIISMVTLVFGFILMWILAW. The region spanning 278–329 is the HAMP domain; it reads LTATPVRVVRAALRRVERGELRTNLVVFDGTELGELQRGFNAMVAGLRERER. Residues 361 to 485 enclose the Guanylate cyclase domain; that stretch reads AVVFIDIVGS…EPVNEAARLC (125 aa).

The protein belongs to the adenylyl cyclase class-3 family.

Its subcellular location is the cell membrane. This is an uncharacterized protein from Mycobacterium tuberculosis (strain CDC 1551 / Oshkosh).